We begin with the raw amino-acid sequence, 951 residues long: Coiled-coil and C2 domain-containing protein 1A (951 aa).

Disordered stretches follow at residues 80 to 139, 185 to 266, 306 to 346, and 437 to 491; these read CMRD…LETT, AIDE…RQRD, VDLS…PPPR, and NQDE…TRAQ. Over residues 84–104 the composition is skewed to acidic residues; it reads PDEDEEEGTDEDDLEADDDLL. 3 positions are modified to phosphothreonine: T92, T204, and T206. Low complexity predominate over residues 201 to 210; it reads PASTPTYSPA. S208 is modified (phosphoserine; by CDK1). Phosphoserine is present on residues S253 and S324. Positions 311 to 333 are enriched in pro residues; sequence LPPPPDQLPPDPPSPPSQPPTPA. Residues 346 to 392 are a coiled coil; it reads RTLLEALEQRMERYQVAAAQAKSKGDQRKARMHERIVKQYQDAIRAH. The residue at position 455 (S455) is a Phosphoserine. Low complexity predominate over residues 475–488; it reads SAPTAKAPPKATST. The stretch at 484 to 517 forms a coiled coil; sequence KATSTRAQQQLAFLEGRKKQLLQAALRAKQKNDV. Positions 637 to 771 constitute a C2 domain; sequence RFEQRTFSVI…EIACEVREIL (135 aa). Residues 818 to 841 are disordered; the sequence is TQVAGPKGKAPPVPAPARESGNRS.

It belongs to the CC2D1 family. Phosphorylation on Ser-208 by CDK1 promotes spindle pole localization and association with SCC1/RAD21.

It is found in the cytoplasm. Its subcellular location is the nucleus. The protein resides in the cytoskeleton. It localises to the microtubule organizing center. The protein localises to the centrosome. In terms of biological role, transcription factor that binds specifically to the DRE (dual repressor element) and represses HTR1A gene transcription in neuronal cells. The combination of calcium and ATP specifically inactivates the binding with FRE. May play a role in the altered regulation of HTR1A associated with anxiety and major depression. Mediates HDAC-independent repression of HTR1A promoter in neuronal cell. Performs essential function in controlling functional maturation of synapses. Plays distinct roles depending on its localization. When cytoplasmic, acts as a scaffold protein in the PI3K/PDK1/AKT pathway. Repressor of HTR1A when nuclear. In the centrosome, regulates spindle pole localization of the cohesin subunit SCC1/RAD21, thereby mediating centriole cohesion during mitosis. This chain is Coiled-coil and C2 domain-containing protein 1A (CC2D1A), found in Homo sapiens (Human).